Consider the following 489-residue polypeptide: WD repeat-containing protein JIP5 (489 aa).

Residues 4-45 (PLSSDALDLCFHPAAETNLLAVGLISGKIQLINYDDYLSSPS) form a WD 1 repeat. Residues 46–66 (SSRTPLAPPSKKSKPSTISSA) form a disordered region. Residues 124-163 (EVHDAAPSRVLPVDESLVVTGDDDGVVRLWDVRKGGGKGI) form a WD 2 repeat. The segment at 192 to 246 (SIKEAKKSKTQLKKQRRRARQAERLKEHDKEKREQNASDTEASEPDSEDDAAIKV) is disordered. The span at 199–210 (SKTQLKKQRRRA) shows a compositional bias: basic residues. Over residues 211-227 (RQAERLKEHDKEKREQN) the composition is skewed to basic and acidic residues. Residues 232-241 (EASEPDSEDD) show a composition bias toward acidic residues. WD repeat units follow at residues 279–318 (DQED…LDHV) and 323–363 (GHPA…GVIA). The interval 417-489 (IVGLAEDDSD…AGKGGFFSDL (73 aa)) is disordered. 2 stretches are compositionally biased toward acidic residues: residues 421–440 (AEDD…DDDD) and 449–472 (DGAE…DSED).

Belongs to the WD repeat WDR55 family.

It localises to the nucleus. The protein localises to the nucleolus. The chain is WD repeat-containing protein JIP5 (JIP5) from Mycosarcoma maydis (Corn smut fungus).